Here is a 289-residue protein sequence, read N- to C-terminus: Diaminopimelate epimerase (289 aa).

Residues N13, Q47, and N67 each contribute to the substrate site. Catalysis depends on C76, which acts as the Proton donor. Substrate is bound by residues 77–78 (GN), N167, N200, and 218–219 (ER). Catalysis depends on C227, which acts as the Proton acceptor. 228–229 (GT) is a substrate binding site.

This sequence belongs to the diaminopimelate epimerase family. As to quaternary structure, homodimer.

It is found in the cytoplasm. The enzyme catalyses (2S,6S)-2,6-diaminopimelate = meso-2,6-diaminopimelate. The protein operates within amino-acid biosynthesis; L-lysine biosynthesis via DAP pathway; DL-2,6-diaminopimelate from LL-2,6-diaminopimelate: step 1/1. Catalyzes the stereoinversion of LL-2,6-diaminopimelate (L,L-DAP) to meso-diaminopimelate (meso-DAP), a precursor of L-lysine and an essential component of the bacterial peptidoglycan. In Burkholderia mallei (strain NCTC 10247), this protein is Diaminopimelate epimerase.